The chain runs to 268 residues: Thiazole synthase (268 aa).

Lys-100 (schiff-base intermediate with DXP) is an active-site residue. 1-deoxy-D-xylulose 5-phosphate-binding positions include Gly-161, 187–188 (AG), and 209–210 (NT). The segment at 248–268 (ASPSSPAEGMFTGTQHPAANS) is disordered. Residues 259 to 268 (TGTQHPAANS) are compositionally biased toward polar residues.

It belongs to the ThiG family. In terms of assembly, homotetramer. Forms heterodimers with either ThiH or ThiS.

The protein localises to the cytoplasm. It catalyses the reaction [ThiS sulfur-carrier protein]-C-terminal-Gly-aminoethanethioate + 2-iminoacetate + 1-deoxy-D-xylulose 5-phosphate = [ThiS sulfur-carrier protein]-C-terminal Gly-Gly + 2-[(2R,5Z)-2-carboxy-4-methylthiazol-5(2H)-ylidene]ethyl phosphate + 2 H2O + H(+). The protein operates within cofactor biosynthesis; thiamine diphosphate biosynthesis. In terms of biological role, catalyzes the rearrangement of 1-deoxy-D-xylulose 5-phosphate (DXP) to produce the thiazole phosphate moiety of thiamine. Sulfur is provided by the thiocarboxylate moiety of the carrier protein ThiS. In vitro, sulfur can be provided by H(2)S. This is Thiazole synthase from Nitrosomonas europaea (strain ATCC 19718 / CIP 103999 / KCTC 2705 / NBRC 14298).